Reading from the N-terminus, the 145-residue chain is MIALIQRVSDARVTVAGENIGQIGPGLLVLLGVEKEDDEAKCKRLAQRVLAYRIFADGDDKMNLNVQQAGGKILVISQFTLAAQTNKGNRPGFSKGAEPIEAKRLYKLFNKNCSEMGIKVETGEFAADMQVSSTNDGPVTFWLQI.

The short motif at 137-138 (GP) is the Gly-cisPro motif, important for rejection of L-amino acids element.

The protein belongs to the DTD family. Homodimer.

The protein resides in the cytoplasm. The enzyme catalyses glycyl-tRNA(Ala) + H2O = tRNA(Ala) + glycine + H(+). The catalysed reaction is a D-aminoacyl-tRNA + H2O = a tRNA + a D-alpha-amino acid + H(+). In terms of biological role, an aminoacyl-tRNA editing enzyme that deacylates mischarged D-aminoacyl-tRNAs. Also deacylates mischarged glycyl-tRNA(Ala), protecting cells against glycine mischarging by AlaRS. Acts via tRNA-based rather than protein-based catalysis; rejects L-amino acids rather than detecting D-amino acids in the active site. By recycling D-aminoacyl-tRNA to D-amino acids and free tRNA molecules, this enzyme counteracts the toxicity associated with the formation of D-aminoacyl-tRNA entities in vivo and helps enforce protein L-homochirality. In Psychromonas ingrahamii (strain DSM 17664 / CCUG 51855 / 37), this protein is D-aminoacyl-tRNA deacylase.